The primary structure comprises 110 residues: Carboxysome shell protein CsoS1B (110 aa).

Positions 8 to 93 constitute a BMC domain; that stretch reads ALGMIETRGL…VHSEVEIILP (86 aa).

Belongs to the bacterial microcompartments protein family. CsoS1 subfamily. Homohexamer with a small central pore. Interacts with the N-terminus (residues 1-136) of RuBisCO (CbbL).

Its subcellular location is the carboxysome. One of shell proteins of the carboxysome, a polyhedral inclusion where RuBisCO (ribulose bisphosphate carboxylase, ccbL-ccbS) is sequestered. Assembles into hexamers which make sheets that form the facets of the polyhedral carboxysome. The shell probably limits the diffusion of CO(2) into and out of the carboxysome. There are estimated to be 540 CsoS1B proteins per carboxysome. Its function is as follows. Unlike beta-carboxysomes, alpha-carboxysomes (Cb) can form without cargo protein. CsoS2 is essential for Cb formation and is also capable of targeting foreign proteins to the Cb. The Cb shell assembles with the aid of CsoS2; CsoS1A, CsoS1B and CsoS1C form the majority of the shell while CsoS4A and CsoS4B form vertices. CsoS1D forms pseudohexamers that probably control metabolite flux into and out of the shell. The chain is Carboxysome shell protein CsoS1B from Halothiobacillus neapolitanus (strain ATCC 23641 / c2) (Thiobacillus neapolitanus).